A 428-amino-acid chain; its full sequence is Lupus La protein homolog A (428 aa).

Residues 7-99 (KEQKLDSDTK…RRSPAKPLPE (93 aa)) form the HTH La-type RNA-binding domain. Residues 111 to 203 (KSVYIKGFPT…EERKLNKSEE (93 aa)) enclose the RRM domain. 2 disordered regions span residues 187–223 (EYHA…DAER) and 323–428 (QESF…VGDQ). 2 consecutive short sequence motifs (nuclear localization signal) follow at residues 196-212 (RKLN…QVKK) and 316-332 (KKIL…RKGR). The 123-residue stretch at 227-349 (EERVGSLLKF…KGRGGKGNDS (123 aa)) folds into the xRRM domain. 2 stretches are compositionally biased toward basic residues: residues 328–343 (KRKG…KGRG) and 352–361 (RKRTQFQGKK). The span at 366 to 377 (SSDDEDDMEESE) shows a compositional bias: acidic residues. Residues 406–428 (RSLDDKAEDGPAVKQSKTEVGDQ) show a composition bias toward basic and acidic residues.

Phosphorylated.

It is found in the nucleus. In terms of biological role, la protein plays a role in the transcription of RNA polymerase III. It is most probably a transcription termination factor. Binds to the 3' termini of virtually all nascent polymerase III transcripts. The protein is Lupus La protein homolog A (ssb-a) of Xenopus laevis (African clawed frog).